Here is a 496-residue protein sequence, read N- to C-terminus: Lysine--tRNA ligase (496 aa).

Mg(2+) is bound by residues Glu-409 and Glu-416.

It belongs to the class-II aminoacyl-tRNA synthetase family. As to quaternary structure, homodimer. Mg(2+) is required as a cofactor.

It localises to the cytoplasm. It catalyses the reaction tRNA(Lys) + L-lysine + ATP = L-lysyl-tRNA(Lys) + AMP + diphosphate. The chain is Lysine--tRNA ligase from Streptococcus pneumoniae (strain Hungary19A-6).